Here is a 200-residue protein sequence, read N- to C-terminus: MEKFSTHTGIGVPLRQSNVDTDQIIPAVYLKRITRTGFEDALFAAWRKDPAFILNQEPFNAGSVLVAGPDFGTGSSREHAVWALKDFGFKTVLSSRFADIFRGNSGKQGLLAAEVAQDDIELIWKVLENAPGTEVTVDLVSKTVMCGNVVAPFEIDDYTRWRLLEGLDDIGLTLQHEEDITAYEATRPAFKPKTLPARLS.

Belongs to the LeuD family. LeuD type 1 subfamily. In terms of assembly, heterodimer of LeuC and LeuD.

It carries out the reaction (2R,3S)-3-isopropylmalate = (2S)-2-isopropylmalate. It functions in the pathway amino-acid biosynthesis; L-leucine biosynthesis; L-leucine from 3-methyl-2-oxobutanoate: step 2/4. Its function is as follows. Catalyzes the isomerization between 2-isopropylmalate and 3-isopropylmalate, via the formation of 2-isopropylmaleate. In Arthrobacter sp. (strain FB24), this protein is 3-isopropylmalate dehydratase small subunit.